The sequence spans 616 residues: Dihydroxy-acid dehydratase (616 aa).

Asp81 contacts Mg(2+). Residue Cys122 coordinates [2Fe-2S] cluster. Residues Asp123 and Lys124 each contribute to the Mg(2+) site. Lys124 is modified (N6-carboxylysine). Cys195 is a [2Fe-2S] cluster binding site. Glu491 provides a ligand contact to Mg(2+). Residue Ser517 is the Proton acceptor of the active site.

The protein belongs to the IlvD/Edd family. Homodimer. The cofactor is [2Fe-2S] cluster. Requires Mg(2+) as cofactor.

The enzyme catalyses (2R)-2,3-dihydroxy-3-methylbutanoate = 3-methyl-2-oxobutanoate + H2O. The catalysed reaction is (2R,3R)-2,3-dihydroxy-3-methylpentanoate = (S)-3-methyl-2-oxopentanoate + H2O. The protein operates within amino-acid biosynthesis; L-isoleucine biosynthesis; L-isoleucine from 2-oxobutanoate: step 3/4. It participates in amino-acid biosynthesis; L-valine biosynthesis; L-valine from pyruvate: step 3/4. Functions in the biosynthesis of branched-chain amino acids. Catalyzes the dehydration of (2R,3R)-2,3-dihydroxy-3-methylpentanoate (2,3-dihydroxy-3-methylvalerate) into 2-oxo-3-methylpentanoate (2-oxo-3-methylvalerate) and of (2R)-2,3-dihydroxy-3-methylbutanoate (2,3-dihydroxyisovalerate) into 2-oxo-3-methylbutanoate (2-oxoisovalerate), the penultimate precursor to L-isoleucine and L-valine, respectively. The protein is Dihydroxy-acid dehydratase of Salmonella heidelberg (strain SL476).